We begin with the raw amino-acid sequence, 380 residues long: Probable protein phosphatase 2C 63 (380 aa).

The region spanning 35–338 is the PPM-type phosphatase domain; it reads DYSIAVVQAN…DDISVIVVYL (304 aa). Residues aspartate 66, glycine 67, aspartate 270, and aspartate 329 each coordinate Mn(2+).

The protein belongs to the PP2C family. Mg(2+) is required as a cofactor. The cofactor is Mn(2+).

The catalysed reaction is O-phospho-L-seryl-[protein] + H2O = L-seryl-[protein] + phosphate. It catalyses the reaction O-phospho-L-threonyl-[protein] + H2O = L-threonyl-[protein] + phosphate. Functionally, may dephosphorylate and repress plasma membrane H(+)-ATPases (PM H(+)-ATPases, e.g. AHA1 and AHA2), thus influencing negatively plant growth and fitness. This chain is Probable protein phosphatase 2C 63, found in Arabidopsis thaliana (Mouse-ear cress).